The sequence spans 152 residues: SsrA-binding protein (152 aa).

The protein belongs to the SmpB family.

The protein resides in the cytoplasm. Required for rescue of stalled ribosomes mediated by trans-translation. Binds to transfer-messenger RNA (tmRNA), required for stable association of tmRNA with ribosomes. tmRNA and SmpB together mimic tRNA shape, replacing the anticodon stem-loop with SmpB. tmRNA is encoded by the ssrA gene; the 2 termini fold to resemble tRNA(Ala) and it encodes a 'tag peptide', a short internal open reading frame. During trans-translation Ala-aminoacylated tmRNA acts like a tRNA, entering the A-site of stalled ribosomes, displacing the stalled mRNA. The ribosome then switches to translate the ORF on the tmRNA; the nascent peptide is terminated with the 'tag peptide' encoded by the tmRNA and targeted for degradation. The ribosome is freed to recommence translation, which seems to be the essential function of trans-translation. The sequence is that of SsrA-binding protein from Gloeobacter violaceus (strain ATCC 29082 / PCC 7421).